A 438-amino-acid chain; its full sequence is sn-glycerol-3-phosphate-binding periplasmic protein UgpB (438 aa).

The signal sequence occupies residues 1 to 23 (MKPLRYTASALALGLALMANAQA). Residues tyrosine 65, glutamate 89, serine 144, serine 270, glycine 307, tyrosine 346, and arginine 397 each contribute to the sn-glycerol 3-phosphate site.

The protein belongs to the bacterial solute-binding protein 1 family. In terms of assembly, the complex is composed of two ATP-binding proteins (UgpC), two transmembrane proteins (UgpA and UgpE) and a solute-binding protein (UgpB).

The protein resides in the periplasm. Functionally, part of the ABC transporter complex UgpBAEC involved in sn-glycerol-3-phosphate (G3P) import. Binds G3P. This chain is sn-glycerol-3-phosphate-binding periplasmic protein UgpB (ugpB), found in Escherichia coli O1:K1 / APEC.